The sequence spans 146 residues: Hemoglobin subunit beta (146 aa).

Valine 1 bears the N-acetylvaline mark. One can recognise a Globin domain in the interval 2 to 146 (HLSGEEKGAV…VATALAHKYH (145 aa)). Position 12 is a phosphothreonine (threonine 12). Serine 44 carries the phosphoserine modification. At lysine 59 the chain carries N6-acetyllysine. Histidine 63 provides a ligand contact to heme b. Lysine 82 is modified (N6-acetyllysine). Residue histidine 92 coordinates heme b. S-nitrosocysteine is present on cysteine 93. Lysine 144 carries the post-translational modification N6-acetyllysine.

This sequence belongs to the globin family. In terms of assembly, heterotetramer of two alpha chains and two beta chains. In terms of tissue distribution, red blood cells.

Functionally, involved in oxygen transport from the lung to the various peripheral tissues. The chain is Hemoglobin subunit beta (HBB) from Tadarida brasiliensis (Brazilian free-tailed bat).